The sequence spans 257 residues: Ribonuclease PH (257 aa).

Phosphate contacts are provided by residues R86 and 124–126 (GTR).

It belongs to the RNase PH family. Homohexameric ring arranged as a trimer of dimers.

The enzyme catalyses tRNA(n+1) + phosphate = tRNA(n) + a ribonucleoside 5'-diphosphate. Its function is as follows. Phosphorolytic 3'-5' exoribonuclease that plays an important role in tRNA 3'-end maturation. Removes nucleotide residues following the 3'-CCA terminus of tRNAs; can also add nucleotides to the ends of RNA molecules by using nucleoside diphosphates as substrates, but this may not be physiologically important. Probably plays a role in initiation of 16S rRNA degradation (leading to ribosome degradation) during starvation. The sequence is that of Ribonuclease PH from Sulfurihydrogenibium sp. (strain YO3AOP1).